The primary structure comprises 84 residues: Small ribosomal subunit protein uS17 (84 aa).

This sequence belongs to the universal ribosomal protein uS17 family. As to quaternary structure, part of the 30S ribosomal subunit.

One of the primary rRNA binding proteins, it binds specifically to the 5'-end of 16S ribosomal RNA. The polypeptide is Small ribosomal subunit protein uS17 (Buchnera aphidicola subsp. Cinara cedri (strain Cc)).